The primary structure comprises 542 residues: Anaerobic glycerol-3-phosphate dehydrogenase subunit A (542 aa).

10 to 38 (DVIIIGGGATGAGIARDCALRGLRVILVE) contributes to the FAD binding site.

Belongs to the FAD-dependent glycerol-3-phosphate dehydrogenase family. As to quaternary structure, composed of a catalytic GlpA/B dimer and of membrane bound GlpC. It depends on FAD as a cofactor. FMN is required as a cofactor.

It localises to the cell inner membrane. The catalysed reaction is a quinone + sn-glycerol 3-phosphate = dihydroxyacetone phosphate + a quinol. The protein operates within polyol metabolism; glycerol degradation via glycerol kinase pathway; glycerone phosphate from sn-glycerol 3-phosphate (anaerobic route): step 1/1. Functionally, conversion of glycerol 3-phosphate to dihydroxyacetone. Uses fumarate or nitrate as electron acceptor. The protein is Anaerobic glycerol-3-phosphate dehydrogenase subunit A (glpA) of Escherichia coli O157:H7.